The primary structure comprises 119 residues: Holo-[acyl-carrier-protein] synthase (119 aa).

Mg(2+) is bound by residues Asp-8 and Glu-60.

It belongs to the P-Pant transferase superfamily. AcpS family. Mg(2+) is required as a cofactor.

It localises to the cytoplasm. The enzyme catalyses apo-[ACP] + CoA = holo-[ACP] + adenosine 3',5'-bisphosphate + H(+). Transfers the 4'-phosphopantetheine moiety from coenzyme A to a Ser of acyl-carrier-protein. This Staphylococcus haemolyticus (strain JCSC1435) protein is Holo-[acyl-carrier-protein] synthase.